The following is a 472-amino-acid chain: 2-amino-4-ketopentanoate thiolase beta subunit (472 aa).

N6-(pyridoxal phosphate)lysine is present on Lys102. Residues Asn128 and 238–242 contribute to the pyridoxal 5'-phosphate site; that span reads AGGGN.

This sequence belongs to the threonine synthase family. As to quaternary structure, heterodimer with OrtA. Requires pyridoxal 5'-phosphate as cofactor.

It catalyses the reaction D-alanine + acetyl-CoA = (2R)-2-amino-4-oxopentanoate + CoA. In terms of biological role, involved in the ornithine fermentation pathway. Catalyzes the thiolytic cleavage of 2-amino-4-ketopentanoate (AKP) with coenzyme A (CoA) to form acetyl-CoA and alanine. It is strictly specific for AKP. This is 2-amino-4-ketopentanoate thiolase beta subunit from Unknown prokaryotic organism.